The following is a 377-amino-acid chain: MTRNIDPIELAKALIAVPSVTPATGAVFDVLEAALTPLGFTVERFIDGIEPDGPVENLLAVRRGSGPKHFGFAGHLDVVPPGVGWTSDAFAPEIRGELLYGRGAVDMKGAIAAFVAAAAATPVDAGTISLIITGDEEGPAIFGTRALMEHMDARRVTPDMIVVGEPTSVNRLGDMVKIGRRGSVNIWIDVPGTQGHVAYPHLADNPIPKLVKILAAIDAVVLDEGSDWFQPSNIEFTDIEVGNGATNVIPASARARLSIRFNDQHRGAELVAMIERIAHEVEPAARVLGKISGEAFLTPPGELSELVAEAIHAETDICAEMSTTGGTSDARFLHALCPVVEFGLTNATMHKLDEAVAIEDLHRLTAIYRGILMRVFL.

Zn(2+) is bound at residue His-75. Asp-77 is an active-site residue. Residue Asp-106 coordinates Zn(2+). Glu-136 (proton acceptor) is an active-site residue. Glu-137, Glu-165, and His-350 together coordinate Zn(2+).

Belongs to the peptidase M20A family. DapE subfamily. In terms of assembly, homodimer. Zn(2+) is required as a cofactor. The cofactor is Co(2+).

It carries out the reaction N-succinyl-(2S,6S)-2,6-diaminopimelate + H2O = (2S,6S)-2,6-diaminopimelate + succinate. The protein operates within amino-acid biosynthesis; L-lysine biosynthesis via DAP pathway; LL-2,6-diaminopimelate from (S)-tetrahydrodipicolinate (succinylase route): step 3/3. In terms of biological role, catalyzes the hydrolysis of N-succinyl-L,L-diaminopimelic acid (SDAP), forming succinate and LL-2,6-diaminopimelate (DAP), an intermediate involved in the bacterial biosynthesis of lysine and meso-diaminopimelic acid, an essential component of bacterial cell walls. This is Succinyl-diaminopimelate desuccinylase from Sphingopyxis alaskensis (strain DSM 13593 / LMG 18877 / RB2256) (Sphingomonas alaskensis).